We begin with the raw amino-acid sequence, 698 residues long: DNA ligase (698 aa).

NAD(+) contacts are provided by residues 35–39, 84–85, and E123; these read DSVYD and SL. The N6-AMP-lysine intermediate role is filled by K125. NAD(+) contacts are provided by R146, E183, K302, and K326. Zn(2+) contacts are provided by C420, C423, C438, and C443. The 87-residue stretch at 612–698 folds into the BRCT domain; it reads NGKGHLNGQT…QNSADTIHLL (87 aa).

This sequence belongs to the NAD-dependent DNA ligase family. LigA subfamily. It depends on Mg(2+) as a cofactor. Mn(2+) is required as a cofactor.

It carries out the reaction NAD(+) + (deoxyribonucleotide)n-3'-hydroxyl + 5'-phospho-(deoxyribonucleotide)m = (deoxyribonucleotide)n+m + AMP + beta-nicotinamide D-nucleotide.. DNA ligase that catalyzes the formation of phosphodiester linkages between 5'-phosphoryl and 3'-hydroxyl groups in double-stranded DNA using NAD as a coenzyme and as the energy source for the reaction. It is essential for DNA replication and repair of damaged DNA. In Synechococcus sp. (strain WH7803), this protein is DNA ligase.